The following is a 196-amino-acid chain: ECF RNA polymerase sigma factor SigK (196 aa).

The interval Tyr-39–Gln-105 is sigma-70 factor domain-2. Positions Glu-62–Gln-65 match the Polymerase core binding motif. The interval Cys-142–Lys-191 is sigma-70 factor domain-4. Positions Tyr-164–Arg-183 form a DNA-binding region, H-T-H motif.

Belongs to the sigma-70 factor family. ECF subfamily. As to quaternary structure, interacts transiently with the RNA polymerase catalytic core formed by RpoA, RpoB, RpoC and RpoZ (2 alpha, 1 beta, 1 beta' and 1 omega subunit) to form the RNA polymerase holoenzyme that can initiate transcription. Interacts (via sigma-70 factor domain 4) with anti-sigma-K factor RskA.

In terms of biological role, sigma factors are initiation factors that promote the attachment of RNA polymerase to specific initiation sites and are then released. Extracytoplasmic function (ECF) sigma factors are held in an inactive form by an anti-sigma factor until released by regulated intramembrane proteolysis. In Mycolicibacterium vanbaalenii (strain DSM 7251 / JCM 13017 / BCRC 16820 / KCTC 9966 / NRRL B-24157 / PYR-1) (Mycobacterium vanbaalenii), this protein is ECF RNA polymerase sigma factor SigK (sigK).